Reading from the N-terminus, the 312-residue chain is Ribonuclease H2 subunit B (312 aa).

At A2 the chain carries N-acetylalanine. Positions 236-256 (EPSASLPNPPSKKIKLSDEPV) are disordered. Residue K295 is modified to N6-acetyllysine. Residue S296 is modified to Phosphoserine.

The protein belongs to the RNase H2 subunit B family. The RNase H2 complex is a heterotrimer composed of the catalytic subunit RNASEH2A and the non-catalytic subunits RNASEH2B and RNASEH2C. As to expression, widely expressed.

It is found in the nucleus. Non catalytic subunit of RNase H2, an endonuclease that specifically degrades the RNA of RNA:DNA hybrids. Participates in DNA replication, possibly by mediating the removal of lagging-strand Okazaki fragment RNA primers during DNA replication. Mediates the excision of single ribonucleotides from DNA:RNA duplexes. In Homo sapiens (Human), this protein is Ribonuclease H2 subunit B (RNASEH2B).